A 154-amino-acid chain; its full sequence is 3-hydroxyacyl-[acyl-carrier-protein] dehydratase FabZ (154 aa).

The active site involves His58.

This sequence belongs to the thioester dehydratase family. FabZ subfamily.

Its subcellular location is the cytoplasm. The catalysed reaction is a (3R)-hydroxyacyl-[ACP] = a (2E)-enoyl-[ACP] + H2O. Its function is as follows. Involved in unsaturated fatty acids biosynthesis. Catalyzes the dehydration of short chain beta-hydroxyacyl-ACPs and long chain saturated and unsaturated beta-hydroxyacyl-ACPs. This Protochlamydia amoebophila (strain UWE25) protein is 3-hydroxyacyl-[acyl-carrier-protein] dehydratase FabZ.